A 532-amino-acid polypeptide reads, in one-letter code: Putative cysteine desulfurase PbSufS (532 aa).

The N-terminal stretch at 1–18 (MNNESICILLLLFVKITS) is a signal peptide. K286 is modified (N6-(pyridoxal phosphate)lysine). C480 serves as the catalytic Cysteine persulfide intermediate.

Belongs to the class-V pyridoxal-phosphate-dependent aminotransferase family. Csd subfamily. As to quaternary structure, monomer. Interacts with SufE; interaction enhances cysteine desulfurase activity of SufS. Pyridoxal 5'-phosphate is required as a cofactor.

The protein localises to the plastid. The protein resides in the apicoplast. The enzyme catalyses (sulfur carrier)-H + L-cysteine = (sulfur carrier)-SH + L-alanine. Its pathway is cofactor biosynthesis; iron-sulfur cluster biosynthesis. In terms of biological role, catalyzes sulfur activation and mobilization in sulfur mobilization (SUF) pathway for iron-sulfur (Fe-S) cluster biogenesis. Active when in complex with a partner protein SufE. Required for apicoplast maintenance. Plays a role in the development of sporozoites in oocysts in mosquitoes. The chain is Putative cysteine desulfurase PbSufS from Plasmodium berghei (strain Anka).